Consider the following 446-residue polypeptide: MSRRRKKLPQESITCEIESLSHEGRGVSHKDGKTLFVEGALPGETVTARYVNSRRSYDELAVEEVLTQHPQRIEPDCQFSKLCGGCSMQHVDLGFQINHKESVLLDHLRHFGDLKPEQVVPPLVGAGRGYRTKARLGVRYVAKRDEVLVGFRERYSNFLTAIDECPILIESVGGRIPELKALVRSLSGYQRIPQIEVAAGDDMCALVIRHMDPLTEEDLQKLIAFSEQTGLAIYLQPKGPDTVAKLWPKDGQELLSYQLRDYGLTMQFHPMDFTQVNRDINRRMLAQALEWLQPQAGETILDLFCGLGNFTLPIARSAAHVVGVEGSEDMVRRGYANAELNGISNVEFHAADLHLPLAPAKEAKHAWLRTYDKVLLDPPRSGAEELAKQMTRFGAKRIVYVSCNPATLARDAGILATQGYKLIKAGVMDMFPHTAHVESMALFEKA.

The 59-residue stretch at K6–E64 folds into the TRAM domain. Residues C77, C83, C86, and C165 each contribute to the [4Fe-4S] cluster site. Residues Q275, F304, N309, E325, D352, and D377 each coordinate S-adenosyl-L-methionine. Residue C403 is the Nucleophile of the active site.

It belongs to the class I-like SAM-binding methyltransferase superfamily. RNA M5U methyltransferase family. RlmD subfamily.

The catalysed reaction is uridine(1939) in 23S rRNA + S-adenosyl-L-methionine = 5-methyluridine(1939) in 23S rRNA + S-adenosyl-L-homocysteine + H(+). Functionally, catalyzes the formation of 5-methyl-uridine at position 1939 (m5U1939) in 23S rRNA. This is 23S rRNA (uracil(1939)-C(5))-methyltransferase RlmD from Hahella chejuensis (strain KCTC 2396).